A 150-amino-acid polypeptide reads, in one-letter code: MQVILLDKVANLGSLGDQVNVKAGYARNFLVPQGKAVPATKKNVEFFEVRRAELEAKLAEILTAAEARATKINELGSVTIASKSGDEGKLFGSIGTRDIADAVTAAGVEVAKSEVRLPNGVLRTTGEHEVQFQVHSDVFAQLNVVVVAEA.

Belongs to the bacterial ribosomal protein bL9 family.

Its function is as follows. Binds to the 23S rRNA. The polypeptide is Large ribosomal subunit protein bL9 (Serratia proteamaculans (strain 568)).